Reading from the N-terminus, the 192-residue chain is Probable nicotinate-nucleotide adenylyltransferase (192 aa).

The protein belongs to the NadD family.

The enzyme catalyses nicotinate beta-D-ribonucleotide + ATP + H(+) = deamido-NAD(+) + diphosphate. It participates in cofactor biosynthesis; NAD(+) biosynthesis; deamido-NAD(+) from nicotinate D-ribonucleotide: step 1/1. Catalyzes the reversible adenylation of nicotinate mononucleotide (NaMN) to nicotinic acid adenine dinucleotide (NaAD). This is Probable nicotinate-nucleotide adenylyltransferase from Bradyrhizobium sp. (strain ORS 278).